Here is a 160-residue protein sequence, read N- to C-terminus: Thebaine synthase 2 (160 aa).

Thebaine is bound at residue Ser74. His89 acts as the Proton acceptor in catalysis. Thr105 lines the thebaine pocket.

Belongs to the MLP family. Homodimer (allosteric) and oligomers. Expressed in poppy latex.

The catalysed reaction is (7S)-O-acetylsalutaridinol = thebaine + acetate + H(+). It functions in the pathway alkaloid biosynthesis; morphine biosynthesis. With respect to regulation, slightly inhibited by salutaridine and (7S)-salutaridinol. Catalyzes the formation of thebaine from (7S)-salutaridinol 7-O-acetate at the expense of labile hydroxylated by-products, which are preferentially produced by spontaneous allylic elimination. No visible activity toward (7S)-salutaridinol (at pH 7). This chain is Thebaine synthase 2, found in Papaver somniferum (Opium poppy).